Reading from the N-terminus, the 64-residue chain is Small ribosomal subunit protein bS21 (64 aa).

The tract at residues 26–64 (DGILSEARRRTRFERPPTRRKRKDAAKRRLAIKAARKAT) is disordered. Residues 43–64 (TRRKRKDAAKRRLAIKAARKAT) are compositionally biased toward basic residues.

It belongs to the bacterial ribosomal protein bS21 family.

In Dehalococcoides mccartyi (strain ATCC BAA-2100 / JCM 16839 / KCTC 5957 / BAV1), this protein is Small ribosomal subunit protein bS21.